Consider the following 485-residue polypeptide: Glutamyl-tRNA(Gln) amidotransferase subunit A (485 aa).

Catalysis depends on charge relay system residues Lys78 and Ser153. The Acyl-ester intermediate role is filled by Ser177.

Belongs to the amidase family. GatA subfamily. In terms of assembly, heterotrimer of A, B and C subunits.

The catalysed reaction is L-glutamyl-tRNA(Gln) + L-glutamine + ATP + H2O = L-glutaminyl-tRNA(Gln) + L-glutamate + ADP + phosphate + H(+). In terms of biological role, allows the formation of correctly charged Gln-tRNA(Gln) through the transamidation of misacylated Glu-tRNA(Gln) in organisms which lack glutaminyl-tRNA synthetase. The reaction takes place in the presence of glutamine and ATP through an activated gamma-phospho-Glu-tRNA(Gln). In Bacillus cereus (strain ATCC 14579 / DSM 31 / CCUG 7414 / JCM 2152 / NBRC 15305 / NCIMB 9373 / NCTC 2599 / NRRL B-3711), this protein is Glutamyl-tRNA(Gln) amidotransferase subunit A.